A 260-amino-acid polypeptide reads, in one-letter code: Ribosomal RNA small subunit methyltransferase G (260 aa).

S-adenosyl-L-methionine-binding residues include Gly-111, Phe-116, and Arg-181.

The protein belongs to the methyltransferase superfamily. RNA methyltransferase RsmG family.

The protein localises to the cytoplasm. The catalysed reaction is guanosine(527) in 16S rRNA + S-adenosyl-L-methionine = N(7)-methylguanosine(527) in 16S rRNA + S-adenosyl-L-homocysteine. Specifically methylates the N7 position of guanine in position 527 of 16S rRNA. The polypeptide is Ribosomal RNA small subunit methyltransferase G (Nitrobacter hamburgensis (strain DSM 10229 / NCIMB 13809 / X14)).